Here is a 60-residue protein sequence, read N- to C-terminus: Pepsin A (60 aa).

A propeptide spans 1-45 (FIIKVPLVKKKSLRKNLKEHGLLKDFLKKHSPNPASKYFPQEAAV) (activation peptide).

This sequence belongs to the peptidase A1 family.

The protein localises to the secreted. The catalysed reaction is Preferential cleavage: hydrophobic, preferably aromatic, residues in P1 and P1' positions. Cleaves 1-Phe-|-Val-2, 4-Gln-|-His-5, 13-Glu-|-Ala-14, 14-Ala-|-Leu-15, 15-Leu-|-Tyr-16, 16-Tyr-|-Leu-17, 23-Gly-|-Phe-24, 24-Phe-|-Phe-25 and 25-Phe-|-Tyr-26 bonds in the B chain of insulin.. Its function is as follows. Shows particularly broad specificity; although bonds involving phenylalanine and leucine are preferred, many others are also cleaved to some extent. In Ursus thibetanus (Asiatic black bear), this protein is Pepsin A (PGA).